Reading from the N-terminus, the 494-residue chain is Psoralen synthase (494 aa).

The helical transmembrane segment at 12–29 (YFFSLFLVTIFLYKWLTL) threads the bilayer. Cys436 is a binding site for heme.

Belongs to the cytochrome P450 family.

It localises to the endoplasmic reticulum membrane. The protein resides in the microsome membrane. It catalyses the reaction (7S)-marmesin + reduced [NADPH--hemoprotein reductase] + O2 = psoralen + acetone + oxidized [NADPH--hemoprotein reductase] + 2 H2O + H(+). Inhibited by columbianetin. In terms of biological role, involved in linear furanocumarin (psoralen) biosynthesis. Converts marmesin to psoralen. This chain is Psoralen synthase (CYP71AJ1), found in Ammi majus (Bishop's weed).